The primary structure comprises 71 residues: Large ribosomal subunit protein bL31 (71 aa).

Residues Cys16, Cys18, Cys38, and Cys41 each coordinate Zn(2+).

The protein belongs to the bacterial ribosomal protein bL31 family. Type A subfamily. As to quaternary structure, part of the 50S ribosomal subunit. Requires Zn(2+) as cofactor.

In terms of biological role, binds the 23S rRNA. This chain is Large ribosomal subunit protein bL31, found in Chromobacterium violaceum (strain ATCC 12472 / DSM 30191 / JCM 1249 / CCUG 213 / NBRC 12614 / NCIMB 9131 / NCTC 9757 / MK).